The primary structure comprises 396 residues: Elongation factor Tu 2 (396 aa).

One can recognise a tr-type G domain in the interval 10 to 206 (KPHVNVGTIG…ALDTYIPTPK (197 aa)). The interval 19-26 (GHVDHGKT) is G1. 19–26 (GHVDHGKT) serves as a coordination point for GTP. A Mg(2+)-binding site is contributed by Thr26. The G2 stretch occupies residues 60–64 (GITIS). Residues 81-84 (DCPG) are G3. Residues 81–85 (DCPGH) and 136–139 (NKAD) contribute to the GTP site. The interval 136–139 (NKAD) is G4. The interval 174–176 (SAL) is G5.

It belongs to the TRAFAC class translation factor GTPase superfamily. Classic translation factor GTPase family. EF-Tu/EF-1A subfamily. As to quaternary structure, monomer.

It is found in the cytoplasm. It catalyses the reaction GTP + H2O = GDP + phosphate + H(+). In terms of biological role, GTP hydrolase that promotes the GTP-dependent binding of aminoacyl-tRNA to the A-site of ribosomes during protein biosynthesis. This is Elongation factor Tu 2 from Ruthia magnifica subsp. Calyptogena magnifica.